A 263-amino-acid chain; its full sequence is MGKNITTSRKIFRYDNGELVQQEDQMATEFPLTVMVNGEEFVTLVCSPDSLEELVIGFLASEGVIRFKNEIKRFTIDESLGFAYVDLVSTKKLQLKDYTKRVIGSCCGKGRHFYFQQDVKTAKTAIDGVTITPENCLKLMRDMQKSSKLFHHTGGVHNAALCSTDKLIAVRSDIGRHNALDKLYGYCLLHQVPVRDKLIVFSGRISSEVLLKAAKIGVSAVISKSAPTELAIQMAEELNIMTIGFARNRSFNVYTHHERIQFS.

The Cysteine persulfide intermediate role is filled by C107.

It belongs to the FdhD family.

The protein resides in the cytoplasm. Required for formate dehydrogenase (FDH) activity. Acts as a sulfur carrier protein that transfers sulfur from IscS to the molybdenum cofactor prior to its insertion into FDH. In Bacillus licheniformis (strain ATCC 14580 / DSM 13 / JCM 2505 / CCUG 7422 / NBRC 12200 / NCIMB 9375 / NCTC 10341 / NRRL NRS-1264 / Gibson 46), this protein is Sulfur carrier protein FdhD.